The sequence spans 427 residues: Glutamyl-tRNA reductase (427 aa).

Residues 49–52 (TCNR), Ser-101, 106–108 (EPQ), and Gln-112 each bind substrate. Residue Cys-50 is the Nucleophile of the active site. 181-186 (GAGETI) contributes to the NADP(+) binding site. The tract at residues 407–427 (FPATPGYRHPPVRPDDADPAP) is disordered. Residues 418-427 (VRPDDADPAP) are compositionally biased toward basic and acidic residues.

Belongs to the glutamyl-tRNA reductase family. Homodimer.

It carries out the reaction (S)-4-amino-5-oxopentanoate + tRNA(Glu) + NADP(+) = L-glutamyl-tRNA(Glu) + NADPH + H(+). It participates in porphyrin-containing compound metabolism; protoporphyrin-IX biosynthesis; 5-aminolevulinate from L-glutamyl-tRNA(Glu): step 1/2. Functionally, catalyzes the NADPH-dependent reduction of glutamyl-tRNA(Glu) to glutamate 1-semialdehyde (GSA). The protein is Glutamyl-tRNA reductase of Stenotrophomonas maltophilia (strain R551-3).